Consider the following 492-residue polypeptide: Cytochrome P450 2B19 (492 aa).

Ser129 carries the post-translational modification Phosphoserine; by PKA. Residue Cys437 participates in heme binding.

It belongs to the cytochrome P450 family. It depends on heme as a cofactor. In terms of tissue distribution, expressed only in differentiated keratinocytes in skin.

It localises to the endoplasmic reticulum membrane. It is found in the microsome membrane. It catalyses the reaction an organic molecule + reduced [NADPH--hemoprotein reductase] + O2 = an alcohol + oxidized [NADPH--hemoprotein reductase] + H2O + H(+). In terms of biological role, cytochromes P450 are a group of heme-thiolate monooxygenases. In liver microsomes, this enzyme is involved in an NADPH-dependent electron transport pathway. It oxidizes a variety of structurally unrelated compounds, including steroids, fatty acids, and xenobiotics. This chain is Cytochrome P450 2B19 (Cyp2b19), found in Mus musculus (Mouse).